Here is a 158-residue protein sequence, read N- to C-terminus: Protein FAM177B (158 aa).

The span at 36–48 (EYSTEEEEEEEKE) shows a compositional bias: acidic residues. Residues 36–59 (EYSTEEEEEEEKEEQSTNSTLDPS) are disordered.

This sequence belongs to the FAM177 family.

The polypeptide is Protein FAM177B (FAM177B) (Homo sapiens (Human)).